A 205-amino-acid polypeptide reads, in one-letter code: SCO2-like protein RC0895 (205 aa).

Cysteine 82, cysteine 86, and histidine 172 together coordinate Cu cation.

It belongs to the SCO1/2 family.

The chain is SCO2-like protein RC0895 from Rickettsia conorii (strain ATCC VR-613 / Malish 7).